The sequence spans 73 residues: UPF0154 protein BcerKBAB4_3367 (73 aa).

The helical transmembrane segment at 4 to 24 (WLGILVGVVALVAGVALGFFI) threads the bilayer.

Belongs to the UPF0154 family.

The protein localises to the cell membrane. This is UPF0154 protein BcerKBAB4_3367 from Bacillus mycoides (strain KBAB4) (Bacillus weihenstephanensis).